The following is a 289-amino-acid chain: Phenylalanine-4-hydroxylase (289 aa).

3 residues coordinate Fe cation: H144, H149, and E189.

It belongs to the biopterin-dependent aromatic amino acid hydroxylase family. Requires Fe(2+) as cofactor.

The enzyme catalyses (6R)-L-erythro-5,6,7,8-tetrahydrobiopterin + L-phenylalanine + O2 = (4aS,6R)-4a-hydroxy-L-erythro-5,6,7,8-tetrahydrobiopterin + L-tyrosine. It functions in the pathway amino-acid degradation; L-phenylalanine degradation; acetoacetate and fumarate from L-phenylalanine: step 1/6. The sequence is that of Phenylalanine-4-hydroxylase (phhA) from Vibrio cholerae serotype O1 (strain ATCC 39315 / El Tor Inaba N16961).